The chain runs to 234 residues: Synaptogyrin-4 (234 aa).

Residues 18-169 form the MARVEL domain; it reads FLKRPKAITR…QAYLAFQELR (152 aa). A run of 4 helical transmembrane segments spans residues 25 to 45, 66 to 86, 104 to 124, and 145 to 165; these read ITRI…LTDG, CSIA…FLAL, LLDL…FCFL, and AAIT…YLAF. The segment at 191–226 is disordered; that stretch reads SPPSAASPVNTPTTGPHGPSYASSSLSPYLSTPKAP. The segment covering 209-221 has biased composition (low complexity); it reads PSYASSSLSPYLS.

It belongs to the synaptogyrin family.

It localises to the membrane. In Bos taurus (Bovine), this protein is Synaptogyrin-4 (SYNGR4).